A 477-amino-acid polypeptide reads, in one-letter code: Tripartite motif-containing protein 72 (477 aa).

Residues cysteine 14, cysteine 17, cysteine 29, histidine 31, cysteine 34, cysteine 37, cysteine 53, cysteine 56, cysteine 86, histidine 89, cysteine 97, aspartate 100, cysteine 105, cysteine 108, histidine 114, and histidine 117 each coordinate Zn(2+). The RING-type zinc-finger motif lies at 14–57; sequence CPLCLQLFDAPVTAECGHSFCRACLGRVAGEPAADGTVLCPCCQ. The B box-type zinc finger occupies 81-122; sequence VPQGHCEEHLDPLSIYCEQDRALVCGVCASLGSHRGHRLLPA. Residues 135 to 232 are a coiled coil; it reads QQKLQLQEAC…EKVLEEVADK (98 aa). Residue cysteine 144 is modified to S-nitrosocysteine. A Phosphoserine modification is found at serine 255. The B30.2/SPRY domain maps to 271–475; that stretch reads DFKFQVWRKM…PLLLVGPEGA (205 aa).

Belongs to the TRIM/RBCC family. In terms of assembly, homodimer. Homooligomer; disulfide-linked. Oligomerizes on the phospholipid membrane. Interacts with DYSF and CAV3. In terms of processing, disulfide bond formation at Cys-242 occurs in case of membrane damage that cause the entry of the oxidized milieu of the extracellular space, resulting in homooligomerization. Post-translationally, S-nitrosylation at Cys-144 stabilizes TRIM72 and protects against oxidation-induced protein degradation and cell death.

The protein localises to the cell membrane. The protein resides in the sarcolemma. It is found in the cytoplasmic vesicle membrane. The catalysed reaction is S-ubiquitinyl-[E2 ubiquitin-conjugating enzyme]-L-cysteine + [acceptor protein]-L-lysine = [E2 ubiquitin-conjugating enzyme]-L-cysteine + N(6)-ubiquitinyl-[acceptor protein]-L-lysine.. The protein operates within protein modification; protein ubiquitination. With respect to regulation, specifically binds phosphatidylserine. The binding to phospholipids enhances ubiquitination activity. Functionally, muscle-specific E3 ubiquitin-protein ligase that plays a central role in cell membrane repair by nucleating the assembly of the repair machinery at injury sites. Its ubiquitination activity is mediated by E2 ubiquitin-conjugating enzymes UBE2D1, UBE2D2 and UBE2D3. Acts as a sensor of oxidation: upon membrane damage, entry of extracellular oxidative environment results in disulfide bond formation and homooligomerization at the injury site. This oligomerization acts as a nucleation site for recruitment of TRIM72-containing vesicles to the injury site, leading to membrane patch formation. Probably acts upstream of the Ca(2+)-dependent membrane resealing process. Required for transport of DYSF to sites of cell injury during repair patch formation. Regulates membrane budding and exocytosis. May be involved in the regulation of the mobility of KCNB1-containing endocytic vesicles. This chain is Tripartite motif-containing protein 72, found in Homo sapiens (Human).